The chain runs to 436 residues: Chorion-specific transcription factor GCMa (436 aa).

A DNA-binding region (GCM) is located at residues 14 to 169 (LSWDINDMKL…KLEAEARRAM (156 aa)). Residues C76, C82, C86, C113, C116, C125, H152, and H154 each coordinate Zn(2+).

Post-translationally, polyubiquitinated in the presence of UBE2D2 and FBXW2 (in vitro).

It is found in the nucleus. Functionally, transcription factor involved in the control of expression of placental growth factor (PGF) and other placenta-specific genes. Binds to the trophoblast-specific element 2 (TSE2) of the aromatase gene enhancer. Binds to the SYDE1 promoter. Has a central role in mediating the differentiation of trophoblast cells along both the villous and extravillous pathways in placental development. The polypeptide is Chorion-specific transcription factor GCMa (Gcm1) (Rattus norvegicus (Rat)).